Consider the following 127-residue polypeptide: Large ribosomal subunit protein bL12 (127 aa).

It belongs to the bacterial ribosomal protein bL12 family. In terms of assembly, homodimer. Part of the ribosomal stalk of the 50S ribosomal subunit. Forms a multimeric L10(L12)X complex, where L10 forms an elongated spine to which 2 to 4 L12 dimers bind in a sequential fashion. Binds GTP-bound translation factors.

In terms of biological role, forms part of the ribosomal stalk which helps the ribosome interact with GTP-bound translation factors. Is thus essential for accurate translation. In Symbiobacterium thermophilum (strain DSM 24528 / JCM 14929 / IAM 14863 / T), this protein is Large ribosomal subunit protein bL12.